Reading from the N-terminus, the 728-residue chain is Polyribonucleotide nucleotidyltransferase (728 aa).

2 residues coordinate Mg(2+): Asp-509 and Asp-515. The KH domain maps to 576-638 (TKIYTFYIPK…TKLKIAILKI (63 aa)). An S1 motif domain is found at 648-715 (GTIYKAKVKN…KFRKIKLSHK (68 aa)).

Belongs to the polyribonucleotide nucleotidyltransferase family. Requires Mg(2+) as cofactor.

It is found in the cytoplasm. It catalyses the reaction RNA(n+1) + phosphate = RNA(n) + a ribonucleoside 5'-diphosphate. Its function is as follows. Involved in mRNA degradation. Catalyzes the phosphorolysis of single-stranded polyribonucleotides processively in the 3'- to 5'-direction. This Karelsulcia muelleri (strain GWSS) (Sulcia muelleri) protein is Polyribonucleotide nucleotidyltransferase.